Reading from the N-terminus, the 291-residue chain is Small ribosomal subunit biogenesis GTPase RsgA (291 aa).

The CP-type G domain occupies lysine 63–leucine 221. GTP is bound by residues threonine 112–aspartate 115 and glycine 164–threonine 172. Zn(2+) is bound by residues cysteine 245, cysteine 250, histidine 252, and cysteine 258.

The protein belongs to the TRAFAC class YlqF/YawG GTPase family. RsgA subfamily. Monomer. Associates with 30S ribosomal subunit, binds 16S rRNA. It depends on Zn(2+) as a cofactor.

It localises to the cytoplasm. Functionally, one of several proteins that assist in the late maturation steps of the functional core of the 30S ribosomal subunit. Helps release RbfA from mature subunits. May play a role in the assembly of ribosomal proteins into the subunit. Circularly permuted GTPase that catalyzes slow GTP hydrolysis, GTPase activity is stimulated by the 30S ribosomal subunit. This is Small ribosomal subunit biogenesis GTPase RsgA from Staphylococcus saprophyticus subsp. saprophyticus (strain ATCC 15305 / DSM 20229 / NCIMB 8711 / NCTC 7292 / S-41).